A 687-amino-acid polypeptide reads, in one-letter code: Glycine--tRNA ligase beta subunit (687 aa).

The protein belongs to the class-II aminoacyl-tRNA synthetase family. Tetramer of two alpha and two beta subunits.

The protein resides in the cytoplasm. It carries out the reaction tRNA(Gly) + glycine + ATP = glycyl-tRNA(Gly) + AMP + diphosphate. The chain is Glycine--tRNA ligase beta subunit from Lactobacillus helveticus (strain DPC 4571).